The chain runs to 260 residues: ARL14 effector protein (260 aa).

Met-1 carries the post-translational modification N-acetylmethionine. Lys-177 participates in a covalent cross-link: Glycyl lysine isopeptide (Lys-Gly) (interchain with G-Cter in SUMO2). Ser-183 bears the Phosphoserine mark.

Interacts with ARL14 and MYO1E.

The protein resides in the cytoplasm. Its function is as follows. Through its interaction with ARL14 and MYO1E, may connect MHC class II-containing cytoplasmic vesicles to the actin network and hence controls the movement of these vesicles along the actin cytoskeleton in dendritic cells. The chain is ARL14 effector protein (ARL14EP) from Bos taurus (Bovine).